The primary structure comprises 642 residues: Polyglycine hydrolase (642 aa).

An N-terminal signal peptide occupies residues 1-23; the sequence is MYTSRLLLSNLASCLSLATLVAS. Asn-37, Asn-100, Asn-159, and Asn-341 each carry an N-linked (GlcNAc...) asparagine glycan. An intrachain disulfide couples Cys-149 to Cys-183. Residue Ser-370 is part of the active site. Asn-390, Asn-407, Asn-444, Asn-487, and Asn-494 each carry an N-linked (GlcNAc...) asparagine glycan.

This sequence belongs to the peptidase S12 family.

Its subcellular location is the secreted. It carries out the reaction a glycyl-glycyl-[protein] + H2O = N-terminal glycyl-[protein] + [protein]-C-terminal glycine. Not inhibited by phenylmethylsulfonyl fluoride (PMSF; serine peptidase class S1 inhibitor), clavulanic acid (beta-lactamase inhibitor) or ampicillin (penicillin-binding protein (PBP) inhibitor). Serine-type endopeptidase that cleaves Gly-Gly bonds in the polyglycine linker of host plant class IV chitinases to disrupt their chitin-binding, and thereby plays a role in lowering the defense responses of the host to the fungus. Degrades Z.mays Endochitinase A (CHIA). Degrades Z.mays Endochitinase B (CHIB). Has no activity on Z.mays CHIA following CHIA cleavage by fungalysin. The sequence is that of Polyglycine hydrolase from Epicoccum sorghinum (Endophyte fungus).